We begin with the raw amino-acid sequence, 217 residues long: tRNA (guanine-N(7)-)-methyltransferase (217 aa).

Positions 44, 69, 96, and 118 each coordinate S-adenosyl-L-methionine. Aspartate 118 is an active-site residue. Residues lysine 122, aspartate 154, and 191–194 each bind substrate; that span reads TEYE.

The protein belongs to the class I-like SAM-binding methyltransferase superfamily. TrmB family.

It catalyses the reaction guanosine(46) in tRNA + S-adenosyl-L-methionine = N(7)-methylguanosine(46) in tRNA + S-adenosyl-L-homocysteine. The protein operates within tRNA modification; N(7)-methylguanine-tRNA biosynthesis. Its function is as follows. Catalyzes the formation of N(7)-methylguanine at position 46 (m7G46) in tRNA. This chain is tRNA (guanine-N(7)-)-methyltransferase, found in Bacillus anthracis (strain CDC 684 / NRRL 3495).